A 95-amino-acid chain; its full sequence is Cell division topological specificity factor (95 aa).

It belongs to the MinE family.

In terms of biological role, prevents the cell division inhibition by proteins MinC and MinD at internal division sites while permitting inhibition at polar sites. This ensures cell division at the proper site by restricting the formation of a division septum at the midpoint of the long axis of the cell. The chain is Cell division topological specificity factor from Synechococcus sp. (strain CC9902).